We begin with the raw amino-acid sequence, 175 residues long: 2-oxo-4-hydroxy-4-carboxy-5-ureidoimidazoline decarboxylase (175 aa).

H67 functions as the Proton donor in the catalytic mechanism. Substrate is bound by residues P68, 84-88 (SRGEQ), and 119-123 (FVICA). Positions 173-175 (TKL) match the Microbody targeting signal motif.

This sequence belongs to the OHCU decarboxylase family. In terms of assembly, homodimer.

It localises to the peroxisome. The catalysed reaction is 5-hydroxy-2-oxo-4-ureido-2,5-dihydro-1H-imidazole-5-carboxylate + H(+) = (S)-allantoin + CO2. It participates in purine metabolism; urate degradation; (S)-allantoin from urate: step 3/3. Functionally, catalyzes the stereoselective decarboxylation of 2-oxo-4-hydroxy-4-carboxy-5-ureidoimidazoline (OHCU) to (S)-allantoin. This Amia calva (Bowfin) protein is 2-oxo-4-hydroxy-4-carboxy-5-ureidoimidazoline decarboxylase (urad).